Reading from the N-terminus, the 31-residue chain is Cytochrome b6-f complex subunit 6 (31 aa).

The chain crosses the membrane as a helical span at residues 4-24; it reads VVSYLGILAAFALVTIGIFLV.

It belongs to the PetL family. The 4 large subunits of the cytochrome b6-f complex are cytochrome b6, subunit IV (17 kDa polypeptide, PetD), cytochrome f and the Rieske protein, while the 4 small subunits are PetG, PetL, PetM and PetN. The complex functions as a dimer.

The protein resides in the plastid. It localises to the chloroplast thylakoid membrane. Its function is as follows. Component of the cytochrome b6-f complex, which mediates electron transfer between photosystem II (PSII) and photosystem I (PSI), cyclic electron flow around PSI, and state transitions. PetL is important for photoautotrophic growth as well as for electron transfer efficiency and stability of the cytochrome b6-f complex. The sequence is that of Cytochrome b6-f complex subunit 6 from Mesostigma viride (Green alga).